Reading from the N-terminus, the 364-residue chain is Chaperone protein DnaJ (364 aa).

The 67-residue stretch at 5-71 (DYYEILGVAK…QKRQAYDQFG (67 aa)) folds into the J domain. A CR-type zinc finger spans residues 127–205 (GSTVKIRIPK…CRGQGLVRKQ (79 aa)). Residues Cys-140, Cys-143, Cys-157, Cys-160, Cys-179, Cys-182, Cys-193, and Cys-196 each coordinate Zn(2+). 4 CXXCXGXG motif repeats span residues 140–147 (CDTCSGIG), 157–164 (CSICSGVG), 179–186 (CGTCSGTG), and 193–200 (CGTCRGQG).

This sequence belongs to the DnaJ family. As to quaternary structure, homodimer. Zn(2+) is required as a cofactor.

The protein localises to the cytoplasm. Functionally, participates actively in the response to hyperosmotic and heat shock by preventing the aggregation of stress-denatured proteins and by disaggregating proteins, also in an autonomous, DnaK-independent fashion. Unfolded proteins bind initially to DnaJ; upon interaction with the DnaJ-bound protein, DnaK hydrolyzes its bound ATP, resulting in the formation of a stable complex. GrpE releases ADP from DnaK; ATP binding to DnaK triggers the release of the substrate protein, thus completing the reaction cycle. Several rounds of ATP-dependent interactions between DnaJ, DnaK and GrpE are required for fully efficient folding. Also involved, together with DnaK and GrpE, in the DNA replication of plasmids through activation of initiation proteins. In Ruthia magnifica subsp. Calyptogena magnifica, this protein is Chaperone protein DnaJ.